The sequence spans 654 residues: Acetyl-coenzyme A synthetase (654 aa).

CoA-binding positions include 196–199 (RGGK) and T316. Residues 392-394 (GEP), 416-421 (DTWWQT), D506, and R521 each bind ATP. Residue S529 coordinates CoA. R532 lines the ATP pocket. Residues V543 and V548 each coordinate Mg(2+). K618 is subject to N6-acetyllysine.

Belongs to the ATP-dependent AMP-binding enzyme family. The cofactor is Mg(2+). In terms of processing, acetylated. Deacetylation by the SIR2-homolog deacetylase activates the enzyme.

The catalysed reaction is acetate + ATP + CoA = acetyl-CoA + AMP + diphosphate. In terms of biological role, catalyzes the conversion of acetate into acetyl-CoA (AcCoA), an essential intermediate at the junction of anabolic and catabolic pathways. AcsA undergoes a two-step reaction. In the first half reaction, AcsA combines acetate with ATP to form acetyl-adenylate (AcAMP) intermediate. In the second half reaction, it can then transfer the acetyl group from AcAMP to the sulfhydryl group of CoA, forming the product AcCoA. The chain is Acetyl-coenzyme A synthetase from Methylobacillus flagellatus (strain ATCC 51484 / DSM 6875 / VKM B-1610 / KT).